We begin with the raw amino-acid sequence, 88 residues long: UPF0223 protein OB1419 (88 aa).

This sequence belongs to the UPF0223 family.

In Oceanobacillus iheyensis (strain DSM 14371 / CIP 107618 / JCM 11309 / KCTC 3954 / HTE831), this protein is UPF0223 protein OB1419.